Consider the following 85-residue polypeptide: RNA-binding protein KhpA (85 aa).

In terms of domain architecture, KH spans 32-85; sequence YLEYNLTVNPEDIGRVIGRQGRVASAIRTIVYSVRVSGPKRVRLTIEDGQQKNS.

Belongs to the KhpA RNA-binding protein family. In terms of assembly, forms a complex with KhpB.

The protein resides in the cytoplasm. In terms of biological role, a probable RNA chaperone. Forms a complex with KhpB which binds to cellular RNA and controls its expression. Plays a role in peptidoglycan (PG) homeostasis and cell length regulation. Functionally, necessary for correct cell elongation. This chain is RNA-binding protein KhpA, found in Lactiplantibacillus plantarum (strain ATCC BAA-793 / NCIMB 8826 / WCFS1) (Lactobacillus plantarum).